A 90-amino-acid polypeptide reads, in one-letter code: Small ribosomal subunit protein bS20 (90 aa).

It belongs to the bacterial ribosomal protein bS20 family.

Its function is as follows. Binds directly to 16S ribosomal RNA. This chain is Small ribosomal subunit protein bS20, found in Nautilia profundicola (strain ATCC BAA-1463 / DSM 18972 / AmH).